The following is a 397-amino-acid chain: GTPase Obg (397 aa).

Positions 1–159 (MKFVDEAEIR…RMLKLELMLL (159 aa)) constitute an Obg domain. The disordered stretch occupies residues 22–44 (SFRREKYVPDGGPDGGDGGDGGS). The segment covering 33-43 (GPDGGDGGDGG) has biased composition (gly residues). The region spanning 160 to 333 (ADVGLLGMPN…LCIKVMDFIE (174 aa)) is the OBG-type G domain. GTP is bound by residues 166-173 (GMPNAGKS), 191-195 (FTTLV), 213-216 (DIPG), 283-286 (NKVD), and 314-316 (SAV). 2 residues coordinate Mg(2+): Ser173 and Thr193. The tract at residues 359-389 (TVENYEDDDDFDDDDDDDFDGDDDDDFDGDD) is disordered. A compositionally biased stretch (acidic residues) spans 361 to 389 (ENYEDDDDFDDDDDDDFDGDDDDDFDGDD).

It belongs to the TRAFAC class OBG-HflX-like GTPase superfamily. OBG GTPase family. Monomer. Mg(2+) serves as cofactor.

It is found in the cytoplasm. In terms of biological role, an essential GTPase which binds GTP, GDP and possibly (p)ppGpp with moderate affinity, with high nucleotide exchange rates and a fairly low GTP hydrolysis rate. Plays a role in control of the cell cycle, stress response, ribosome biogenesis and in those bacteria that undergo differentiation, in morphogenesis control. The sequence is that of GTPase Obg from Pseudoalteromonas atlantica (strain T6c / ATCC BAA-1087).